A 169-amino-acid chain; its full sequence is Ribosome maturation factor RimM (169 aa).

A PRC barrel domain is found at 95-168; the sequence is PPDTAYIHDL…EMTIRRFDEF (74 aa).

This sequence belongs to the RimM family. Binds ribosomal protein uS19.

It is found in the cytoplasm. An accessory protein needed during the final step in the assembly of 30S ribosomal subunit, possibly for assembly of the head region. Essential for efficient processing of 16S rRNA. May be needed both before and after RbfA during the maturation of 16S rRNA. It has affinity for free ribosomal 30S subunits but not for 70S ribosomes. This Prosthecochloris aestuarii (strain DSM 271 / SK 413) protein is Ribosome maturation factor RimM.